The following is a 542-amino-acid chain: MAKEIKFSEETRRALEAGVNKLADTVKVTLGPKGRNVILDKKFGSPLITNDGVTIAKEIELEDRFENMGAQLVKEVATKTNDVAGDGTTTATVLAQAIIREGLKNVTAGANPILLRKGIQKAVTVAVEELKNQSRIVETQEAISQVASISAGDEEVGKLIAEAMEIVGKDGVITVEESQTMNTELDAVEGMQFDRGFVSAYMVTDVDKMEAVLNDPYILITDKKISNIQELLPVLEQIVQQGKKLLIIAEDVEGEALSTLVVNKLRGTFDVVAVKAPGFGDRRKEMLQDIAILTGAQVISEELGYDLKEADLSMLGRASSVKVTKESTTIVDGSGDKKAIEDRVTQIKHQVEQTTSDFDREKLMERLAKLAGGVAVVKVGAATEVELKERKLRIEDALNATRAAVEEGIVAGGGTAFVSVIPAIGTLIESLEGEVKLGAQIVKKALEEPLRQIAINAGLEGAVIVQNVVNSEAETGFDALNEKYVNMIEAGIVDPTKVSRSALQNAASIASTFLTTEAAVADLPEKEDAGMPGMGGGMPGMM.

ATP contacts are provided by residues 29 to 32 (TLGP), 86 to 90 (DGTTT), glycine 413, 478 to 480 (DAL), and aspartate 494.

This sequence belongs to the chaperonin (HSP60) family. As to quaternary structure, forms a cylinder of 14 subunits composed of two heptameric rings stacked back-to-back. Interacts with the co-chaperonin GroES.

The protein localises to the cytoplasm. It carries out the reaction ATP + H2O + a folded polypeptide = ADP + phosphate + an unfolded polypeptide.. In terms of biological role, together with its co-chaperonin GroES, plays an essential role in assisting protein folding. The GroEL-GroES system forms a nano-cage that allows encapsulation of the non-native substrate proteins and provides a physical environment optimized to promote and accelerate protein folding. This Clostridioides difficile (strain 630) (Peptoclostridium difficile) protein is Chaperonin GroEL.